The primary structure comprises 164 residues: UPF0114 protein KPK_0696 (164 aa).

Transmembrane regions (helical) follow at residues 15–35 (LLAP…IKFF), 53–73 (LILT…LVMV), 109–126 (VAAS…RVFM), and 136–156 (LMWY…MGYL).

The protein belongs to the UPF0114 family.

The protein localises to the cell membrane. In Klebsiella pneumoniae (strain 342), this protein is UPF0114 protein KPK_0696.